A 160-amino-acid chain; its full sequence is Negative modulator of initiation of replication (160 aa).

This sequence belongs to the SeqA family. As to quaternary structure, homodimer. Polymerizes to form helical filaments.

It localises to the cytoplasm. Functionally, negative regulator of replication initiation, which contributes to regulation of DNA replication and ensures that replication initiation occurs exactly once per chromosome per cell cycle. Binds to pairs of hemimethylated GATC sequences in the oriC region, thus preventing assembly of replication proteins and re-initiation at newly replicated origins. Repression is relieved when the region becomes fully methylated. This is Negative modulator of initiation of replication from Idiomarina loihiensis (strain ATCC BAA-735 / DSM 15497 / L2-TR).